Reading from the N-terminus, the 345-residue chain is Anthranilate phosphoribosyltransferase (345 aa).

Residues G84, 87–88 (GD), T92, 94–97 (NIST), 112–120 (KHGNRSVSS), and S124 each bind 5-phospho-alpha-D-ribose 1-diphosphate. G84 lines the anthranilate pocket. S96 is a binding site for Mg(2+). Position 115 (N115) interacts with anthranilate. R170 lines the anthranilate pocket. Residues D229 and E230 each coordinate Mg(2+).

This sequence belongs to the anthranilate phosphoribosyltransferase family. In terms of assembly, homodimer. It depends on Mg(2+) as a cofactor.

It carries out the reaction N-(5-phospho-beta-D-ribosyl)anthranilate + diphosphate = 5-phospho-alpha-D-ribose 1-diphosphate + anthranilate. Its pathway is amino-acid biosynthesis; L-tryptophan biosynthesis; L-tryptophan from chorismate: step 2/5. Functionally, catalyzes the transfer of the phosphoribosyl group of 5-phosphorylribose-1-pyrophosphate (PRPP) to anthranilate to yield N-(5'-phosphoribosyl)-anthranilate (PRA). The sequence is that of Anthranilate phosphoribosyltransferase from Xanthomonas euvesicatoria pv. vesicatoria (strain 85-10) (Xanthomonas campestris pv. vesicatoria).